Here is a 417-residue protein sequence, read N- to C-terminus: Phosphoglycerate kinase 1 (417 aa).

At S2 the chain carries N-acetylserine. A phosphoserine mark is found at S2 and S4. The tract at residues 2-186 (SLSNKLTLDK…VGVNLPQKAG (185 aa)) is globular domain-1. At K6 the chain carries N6-succinyllysine. K11 bears the N6-acetyllysine mark. (2R)-3-phosphoglycerate is bound by residues V23, D24, F25, N26, Q38, and R39. The mitochondrial targeting region exposed following cis-trans isomerization by PIN1 and recognized by the TOM complex for mitochondrial translocation of the protein stretch occupies residues 38–43 (QRIKAA). At K48 the chain carries N6-acetyllysine; alternate. N6-succinyllysine; alternate is present on K48. Residues S62, H63, G65, and R66 each contribute to the (2R)-3-phosphoglycerate site. K75 carries the N6-acetyllysine modification. Y76 carries the phosphotyrosine modification. N6-acetyllysine occurs at positions 86 and 91. At K97 the chain carries N6-acetyllysine; alternate. Position 97 is an N6-(2-hydroxyisobutyryl)lysine; alternate (K97). Residues L122 and R123 each contribute to the (2R)-3-phosphoglycerate site. K131 is subject to N6-acetyllysine; alternate. At K131 the chain carries N6-malonyllysine; alternate. At K146 the chain carries N6-acetyllysine. (2R)-3-phosphoglycerate-binding residues include H170 and R171. The interval 187-190 (GFLM) is linker. K191 is modified (N6-succinyllysine). Residues 191 to 417 (KKELNYFAKA…LPGVDALSNV (227 aa)) are globular domain-2. Y196 carries the phosphotyrosine modification. K199 bears the N6-acetyllysine mark. Position 203 is a phosphoserine (S203). G214 contributes to the ADP binding site. Residue G214 coordinates CDP. A215 and K216 together coordinate AMP. An ATP-binding site is contributed by A215. A215 contacts Mg(2+). K216 carries the post-translational modification N6-(2-hydroxyisobutyryl)lysine. Residues A218 and D219 each contribute to the Mg(2+) site. Residue D219 coordinates CDP. K220 provides a ligand contact to AMP. Residue K220 coordinates ATP. The residue at position 220 (K220) is an N6-(2-hydroxyisobutyryl)lysine. An ADP-binding site is contributed by G238. A CDP-binding site is contributed by G238. An AMP-binding site is contributed by G239. G239 contacts ATP. Residues K267 and K291 each carry the N6-acetyllysine modification. Residue G313 coordinates AMP. G313 serves as a coordination point for ATP. At K323 the chain carries N6-(2-hydroxyisobutyryl)lysine. 3 residues coordinate CDP: G338, V340, and F343. An ADP-binding site is contributed by F343. Position 344 (E344) interacts with AMP. E344 lines the ATP pocket. The residue at position 361 (K361) is an N6-acetyllysine. 2 residues coordinate ATP: D375 and T376. Residue D375 participates in Mg(2+) binding. Residues 406–417 (KVLPGVDALSNV) are associated with globular domain 1.

It belongs to the phosphoglycerate kinase family. In terms of assembly, monomer. Interacts with kinase MAPK1/ERK2; the interaction is direct, occurs under hypoxic conditions, and promotes its interaction with PIN1. Interacts with peptidyl-prolyl cis-trans isomerase PIN1; the interaction is direct, occurs under hypoxic conditions, and targets the protein to the mitochondrion by promoting interactions with the TOM complex. Interacts with mitochondrial circRNA mcPGK1 (via its 2nd stem-loop); the interaction is direct and targets the protein to the mitochondrion by promoting interactions with the TOM complex. Interacts with pyruvate dehydrogenase kinase PDK1; the interaction is direct, occurs under hypoxic conditions and leads to PDK1-mediated inhibition of pyruvate dehydrogenase complex activity. The cofactor is Mg(2+). In terms of processing, phosphorylated at Ser-203 by MAPK1/ERK2 under hypoxic conditions, which promotes its mitochondrial targeting.

The protein resides in the cytoplasm. Its subcellular location is the cytosol. The protein localises to the mitochondrion matrix. The enzyme catalyses (2R)-3-phosphoglycerate + ATP = (2R)-3-phospho-glyceroyl phosphate + ADP. It catalyses the reaction L-seryl-[protein] + ATP = O-phospho-L-seryl-[protein] + ADP + H(+). Its pathway is carbohydrate degradation; glycolysis; pyruvate from D-glyceraldehyde 3-phosphate: step 2/5. Its function is as follows. Catalyzes one of the two ATP producing reactions in the glycolytic pathway via the reversible conversion of 1,3-diphosphoglycerate to 3-phosphoglycerate. Both L- and D- forms of purine and pyrimidine nucleotides can be used as substrates, but the activity is much lower on pyrimidines. In addition to its role as a glycolytic enzyme, it seems that PGK-1 acts as a polymerase alpha cofactor protein (primer recognition protein). Acts as a protein kinase when localized to the mitochondrion where it phosphorylates pyruvate dehydrogenase kinase PDK1 to inhibit pyruvate dehydrogenase complex activity and suppress the formation of acetyl-coenzyme A from pyruvate, and consequently inhibit oxidative phosphorylation and promote glycolysis. May play a role in sperm motility. The chain is Phosphoglycerate kinase 1 (PGK1) from Equus caballus (Horse).